A 529-amino-acid polypeptide reads, in one-letter code: Peptide chain release factor 3 (529 aa).

The region spanning 11–280 (KKRRTFAIIS…GLVEWAPAPL (270 aa)) is the tr-type G domain. GTP-binding positions include 20-27 (SHPDAGKT), 88-92 (DTPGH), and 142-145 (NKLD).

It belongs to the TRAFAC class translation factor GTPase superfamily. Classic translation factor GTPase family. PrfC subfamily.

The protein resides in the cytoplasm. In terms of biological role, increases the formation of ribosomal termination complexes and stimulates activities of RF-1 and RF-2. It binds guanine nucleotides and has strong preference for UGA stop codons. It may interact directly with the ribosome. The stimulation of RF-1 and RF-2 is significantly reduced by GTP and GDP, but not by GMP. In Alteromonas mediterranea (strain DSM 17117 / CIP 110805 / LMG 28347 / Deep ecotype), this protein is Peptide chain release factor 3.